A 208-amino-acid polypeptide reads, in one-letter code: Putative dioxygenase RT0384 (208 aa).

This sequence belongs to the intradiol ring-cleavage dioxygenase family.

In Rickettsia typhi (strain ATCC VR-144 / Wilmington), this protein is Putative dioxygenase RT0384.